A 222-amino-acid polypeptide reads, in one-letter code: Glutathione transferase GST 23 (222 aa).

Residues 4 to 83 enclose the GST N-terminal domain; that stretch reads KGVKVLGMWA…YIDEVWKGGY (80 aa). Residues serine 14, lysine 41, valine 55, and 67 to 68 contribute to the glutathione site; that span reads ES. One can recognise a GST C-terminal domain in the interval 89 to 220; the sequence is DPYERAQARF…ANKARREQLL (132 aa).

This sequence belongs to the GST superfamily.

It carries out the reaction RX + glutathione = an S-substituted glutathione + a halide anion + H(+). Its function is as follows. Involved in multiple disease resistance (MDR). The protein is Glutathione transferase GST 23 of Zea mays (Maize).